Reading from the N-terminus, the 1442-residue chain is Protein patched homolog 1 (1442 aa).

A disordered region spans residues methionine 1–alanine 45. Residues methionine 1–lysine 101 lie on the Cytoplasmic side of the membrane. Residues arginine 28 to glycine 39 are compositionally biased toward basic residues. A helical membrane pass occupies residues phenylalanine 102 to glutamate 122. The Extracellular portion of the chain corresponds to threonine 123–aspartate 436. N-linked (GlcNAc...) asparagine glycosylation is found at asparagine 141, asparagine 312, asparagine 349, and asparagine 414. Residues valine 437–methionine 457 traverse the membrane as a helical segment. The SSD domain maps to serine 438–methionine 598. At leucine 458–alanine 472 the chain is on the cytoplasmic side. A helical transmembrane segment spans residues glycine 473–isoleucine 493. Topologically, residues serine 494–glutamine 501 are extracellular. A helical membrane pass occupies residues valine 502–phenylalanine 522. The Cytoplasmic portion of the chain corresponds to serine 523 to serine 547. Residues valine 548 to proline 568 form a helical membrane-spanning segment. Residues alanine 569–alanine 577 lie on the Extracellular side of the membrane. Residues alanine 578–methionine 598 traverse the membrane as a helical segment. The Cytoplasmic segment spans residues aspartate 599 to lysine 747. Residues alanine 748–threonine 768 traverse the membrane as a helical segment. Over arginine 769–tryptophan 1026 the chain is Extracellular. N-linked (GlcNAc...) asparagine glycans are attached at residues asparagine 827, asparagine 874, and asparagine 999. The helical transmembrane segment at leucine 1027–leucine 1047 threads the bilayer. At asparagine 1048–glycine 1053 the chain is on the cytoplasmic side. Residues isoleucine 1054–glycine 1074 traverse the membrane as a helical segment. The Extracellular portion of the chain corresponds to isoleucine 1075–valine 1082. A helical membrane pass occupies residues valine 1083–leucine 1101. Residues alanine 1102 to histidine 1120 are Cytoplasmic-facing. A helical membrane pass occupies residues methionine 1121–glycine 1141. The Extracellular segment spans residues serine 1142 to alanine 1153. Residues valine 1154–leucine 1174 form a helical membrane-spanning segment. Residues serine 1175–glutamate 1442 are Cytoplasmic-facing. 2 disordered regions span residues glycine 1188–serine 1231 and serine 1266–lysine 1338. The span at serine 1217–serine 1226 shows a compositional bias: low complexity. Positions glutamine 1276–tryptophan 1293 are enriched in polar residues.

The protein belongs to the patched family. Post-translationally, glycosylation is necessary for SHH binding. Expression is seen in the embryonic neural tube, sclerotome, visceral mesoderm, and limb bud.

The protein localises to the membrane. Its function is as follows. Acts as a receptor for sonic hedgehog (SHH), indian hedgehog (IHH) and desert hedgehog (DHH). Associates with the smoothened protein (SMO) to transduce the hedgehog's proteins signal. The chain is Protein patched homolog 1 (PTCH1) from Gallus gallus (Chicken).